The sequence spans 196 residues: MNTYLSEITNLIYYINLKEVCMLYNNIKSYLLSGITVILLTGHPVIAADNVSKPDNKSQTAYLQHPPDLRPFSIFDYYLDNMFEHKLSAYSSSAIRTKFITQDKQYILVLEVPGYDKSQIKVKVNSNKLFITGNVEQNNKSEASDDYTKRNFNYVVSLYEDVDQNNISSNLKNGILTITLPRIEVKEKDAKEIPIQ.

The sHSP domain occupies 88–196 (SAYSSSAIRT…EKDAKEIPIQ (109 aa)).

The protein belongs to the small heat shock protein (HSP20) family.

The protein is Small heat shock protein C3 (hspc3-1) of Rickettsia felis (strain ATCC VR-1525 / URRWXCal2) (Rickettsia azadi).